Here is a 197-residue protein sequence, read N- to C-terminus: Protein GrpE (197 aa).

The tract at residues 1–43 (MSSKEQKTPDGQAPEEIVTEQHEEVESVESAESAEQVDPRDEE) is disordered.

This sequence belongs to the GrpE family. Homodimer.

Its subcellular location is the cytoplasm. In terms of biological role, participates actively in the response to hyperosmotic and heat shock by preventing the aggregation of stress-denatured proteins, in association with DnaK and GrpE. It is the nucleotide exchange factor for DnaK and may function as a thermosensor. Unfolded proteins bind initially to DnaJ; upon interaction with the DnaJ-bound protein, DnaK hydrolyzes its bound ATP, resulting in the formation of a stable complex. GrpE releases ADP from DnaK; ATP binding to DnaK triggers the release of the substrate protein, thus completing the reaction cycle. Several rounds of ATP-dependent interactions between DnaJ, DnaK and GrpE are required for fully efficient folding. The polypeptide is Protein GrpE (Cronobacter sakazakii (strain ATCC BAA-894) (Enterobacter sakazakii)).